Reading from the N-terminus, the 485-residue chain is Endo-1,4-beta-xylanase C (485 aa).

The signal sequence occupies residues 1 to 19; the sequence is MKFLQIIPVLLSLTSTTLA. The 201-residue stretch at 34-234 folds into the GH11 domain; sequence KETGNKVGTI…GNGGVSGTAD (201 aa). Residues Asn56 and Asn107 are each glycosylated (N-linked (GlcNAc...) asparagine). Catalysis depends on Glu128, which acts as the Nucleophile. A glycan (N-linked (GlcNAc...) asparagine) is linked at Asn175. Residue Glu221 is the Proton donor of the active site. The tract at residues 250–450 is disordered; it reads ASPAPAGGAP…PQNASDGGNC (201 aa). 2 stretches are compositionally biased toward low complexity: residues 265 to 330 and 344 to 354; these read AGND…QGQH and GSDFNNWSQGG. Repeat copies occupy residues 275–280, 281–286, 287–292, 293–298, 299–304, 310–315, and 316–321. Residues 275–321 form a 7 X 6 AA tandem repeats of G-Q-Q-P-P-Q region; sequence GQQPPQGQQPPQGQQPPQGQQPPQGQQPPQGNDQQGQQPPQGQQPPQ. Residue Asn349 is glycosylated (N-linked (GlcNAc...) asparagine). 8 tandem repeats follow at residues 353–361, 362–370, 371–379, 380–388, 389–397, 399–407, 408–416, and 417–425. The 8 X 9 AA tandem repeats of G-G-[SN]-P-W-G-G-N-Q stretch occupies residues 353–425; it reads GGSPWGGNQG…QGGNPWGGNQ (73 aa). Positions 355–425 are enriched in gly residues; sequence SPWGGNQGGS…QGGNPWGGNQ (71 aa). Residues 426–445 show a composition bias toward low complexity; sequence WGAPQNAAAPQSAAAPQNAS. The N-linked (GlcNAc...) asparagine glycan is linked to Asn443. A CBM1 domain is found at 449–484; it reads NCASLWGQCGGQGYNGPSCCSEGSCKPINEYFHQCQ.

Belongs to the glycosyl hydrolase 11 (cellulase G) family.

It localises to the secreted. The enzyme catalyses Endohydrolysis of (1-&gt;4)-beta-D-xylosidic linkages in xylans.. It participates in glycan degradation; xylan degradation. Endo-1,4-beta-xylanase involved in the hydrolysis of xylan, a major structural heterogeneous polysaccharide found in plant biomass representing the second most abundant polysaccharide in the biosphere, after cellulose. In Neocallimastix patriciarum (Rumen fungus), this protein is Endo-1,4-beta-xylanase C (xynC).